A 206-amino-acid chain; its full sequence is Probable 5-formyltetrahydrofolate cyclo-ligase (206 aa).

ATP contacts are provided by residues 8–12 (KSELR) and Arg12. Substrate contacts are provided by residues Val54, Glu59, and 146–150 (HGKGY). 143 to 151 (RCGHGKGYY) contacts ATP. Residues Asp152 and Asp188 each coordinate Mg(2+).

This sequence belongs to the 5-formyltetrahydrofolate cyclo-ligase family. Monomer. Mg(2+) serves as cofactor.

The protein resides in the cytoplasm. The catalysed reaction is (6S)-5-formyl-5,6,7,8-tetrahydrofolate + ATP = (6R)-5,10-methenyltetrahydrofolate + ADP + phosphate. In terms of biological role, contributes to tetrahydrofolate metabolism. Helps regulate carbon flow through the folate-dependent one-carbon metabolic network that supplies carbon for the biosynthesis of purines, thymidine and amino acids. Catalyzes the irreversible conversion of 5-formyltetrahydrofolate (5-CHO-H(4)PteGlu) to yield 5,10-methenyltetrahydrofolate. The protein is Probable 5-formyltetrahydrofolate cyclo-ligase of Caenorhabditis elegans.